The primary structure comprises 249 residues: DNA repair protein RecO (249 aa).

This sequence belongs to the RecO family.

Its function is as follows. Involved in DNA repair and RecF pathway recombination. This is DNA repair protein RecO from Lactobacillus delbrueckii subsp. bulgaricus (strain ATCC BAA-365 / Lb-18).